The chain runs to 1053 residues: CRISPR-associated endonuclease Cas9 (1053 aa).

A ruvC-I region spans residues 1–41; sequence MKRNYILGLDIGITSVGYGIIDYETRDVIDAGVRLFKEANV. Residue Asp-10 is the For RuvC-like nuclease domain of the active site. Asp-10 serves as a coordination point for Mg(2+). The recognition lobe stretch occupies residues 41-426; it reads VENNEGRRSK…IFNRLKLVPK (386 aa). The segment at 435–481 is ruvC-II; that stretch reads EIPTTLVDDFILSPVVKRSFIQSIKVINAIIKKYGLPNDIIIELARE. Mg(2+) contacts are provided by Glu-477 and Glu-481. In terms of domain architecture, HNH Cas9-type spans 480-646; sequence REKNSKDAQK…VQKDFINRNL (167 aa). The Proton acceptor for HNH nuclease domain role is filled by His-557. The tract at residues 650–775 is ruvC-III; it reads RYATRGLMNL…FKDYKYSHRV (126 aa). His-701 contacts Mg(2+). Tyr-789 contributes to the RNA binding site. PAM substrate-binding stretches follow at residues 882–889 and 985–993; these read YYGNKLNA and NNDLLNRIE. The interval 910 to 1053 is PAM-interacting domain (PI); that stretch reads KPYRFDVYLD…KKHPQIIKKG (144 aa).

The protein belongs to the CRISPR-associated Cas9 family. Subtype II-A subfamily. In terms of assembly, monomer. Binds crRNA and tracrRNA. Mg(2+) serves as cofactor.

Its function is as follows. CRISPR (clustered regularly interspaced short palindromic repeat) is an adaptive immune system that provides protection against mobile genetic elements (viruses, transposable elements and conjugative plasmids). CRISPR clusters contain spacers, sequences complementary to antecedent mobile elements, and target invading nucleic acids. CRISPR clusters are transcribed and processed into CRISPR RNA (crRNA). In type II CRISPR systems correct processing of pre-crRNA requires a trans-encoded small RNA (tracrRNA), endogenous ribonuclease 3 (rnc) and this protein. The tracrRNA serves as a guide for ribonuclease 3-aided processing of pre-crRNA. Subsequently Cas9/crRNA/tracrRNA endonucleolytically cleaves linear or circular dsDNA target complementary to the spacer; Cas9 is inactive in the absence of the 2 guide RNAs (gRNA). Cas9 recognizes the protospacer adjacent motif (PAM) in the CRISPR repeat sequences to help distinguish self versus nonself, as targets within the bacterial CRISPR locus do not have PAMs. PAM recognition is also required for catalytic activity. The protein is CRISPR-associated endonuclease Cas9 of Staphylococcus aureus.